Here is a 384-residue protein sequence, read N- to C-terminus: S-adenosylmethionine synthase (384 aa).

H15 is an ATP binding site. D17 provides a ligand contact to Mg(2+). K(+) is bound at residue E43. L-methionine contacts are provided by E56 and Q99. The interval 99 to 109 (QSPDINQGVDR) is flexible loop. Residues 164 to 166 (DAK), 230 to 231 (RF), D239, 245 to 246 (RK), A262, and K266 contribute to the ATP site. Residue D239 coordinates L-methionine. K270 is an L-methionine binding site.

It belongs to the AdoMet synthase family. Homotetramer; dimer of dimers. The cofactor is Mg(2+). It depends on K(+) as a cofactor.

The protein localises to the cytoplasm. The enzyme catalyses L-methionine + ATP + H2O = S-adenosyl-L-methionine + phosphate + diphosphate. It participates in amino-acid biosynthesis; S-adenosyl-L-methionine biosynthesis; S-adenosyl-L-methionine from L-methionine: step 1/1. Catalyzes the formation of S-adenosylmethionine (AdoMet) from methionine and ATP. The overall synthetic reaction is composed of two sequential steps, AdoMet formation and the subsequent tripolyphosphate hydrolysis which occurs prior to release of AdoMet from the enzyme. The sequence is that of S-adenosylmethionine synthase from Salmonella arizonae (strain ATCC BAA-731 / CDC346-86 / RSK2980).